A 757-amino-acid chain; its full sequence is Polyribonucleotide nucleotidyltransferase (757 aa).

Mg(2+) is bound by residues aspartate 482 and aspartate 488. The KH domain maps to proline 549–methionine 608. The S1 motif domain maps to glycine 618–arginine 686. The segment at glycine 698–tyrosine 757 is disordered. The span at asparagine 702 to asparagine 714 shows a compositional bias: basic and acidic residues. Positions glycine 725–arginine 734 are enriched in basic residues.

Belongs to the polyribonucleotide nucleotidyltransferase family. It depends on Mg(2+) as a cofactor.

It localises to the cytoplasm. It catalyses the reaction RNA(n+1) + phosphate = RNA(n) + a ribonucleoside 5'-diphosphate. In terms of biological role, involved in mRNA degradation. Catalyzes the phosphorolysis of single-stranded polyribonucleotides processively in the 3'- to 5'-direction. This chain is Polyribonucleotide nucleotidyltransferase, found in Wolbachia pipientis wMel.